We begin with the raw amino-acid sequence, 126 residues long: Large ribosomal subunit protein bL17 (126 aa).

This sequence belongs to the bacterial ribosomal protein bL17 family. As to quaternary structure, part of the 50S ribosomal subunit. Contacts protein L32.

This Xylella fastidiosa (strain Temecula1 / ATCC 700964) protein is Large ribosomal subunit protein bL17.